Consider the following 944-residue polypeptide: Leucine--tRNA ligase 2 (944 aa).

The short motif at 36-46 (PYPNSPFHLGH) is the 'HIGH' region element. Positions 621–625 (KMSKS) match the 'KMSKS' region motif. Lys-624 serves as a coordination point for ATP.

Belongs to the class-I aminoacyl-tRNA synthetase family.

It localises to the cytoplasm. It catalyses the reaction tRNA(Leu) + L-leucine + ATP = L-leucyl-tRNA(Leu) + AMP + diphosphate. This Sulfurisphaera tokodaii (strain DSM 16993 / JCM 10545 / NBRC 100140 / 7) (Sulfolobus tokodaii) protein is Leucine--tRNA ligase 2.